The chain runs to 338 residues: Glyceraldehyde-3-phosphate dehydrogenase (338 aa).

Residues 12–13, aspartate 34, and arginine 79 each bind NAD(+); that span reads RI. Residues 150-152, threonine 181, 210-211, and arginine 233 contribute to the D-glyceraldehyde 3-phosphate site; these read SCT and TG. Cysteine 151 functions as the Nucleophile in the catalytic mechanism. Residue asparagine 315 participates in NAD(+) binding.

Belongs to the glyceraldehyde-3-phosphate dehydrogenase family. As to quaternary structure, homotetramer.

Its subcellular location is the cytoplasm. The enzyme catalyses D-glyceraldehyde 3-phosphate + phosphate + NAD(+) = (2R)-3-phospho-glyceroyl phosphate + NADH + H(+). It functions in the pathway carbohydrate degradation; glycolysis; pyruvate from D-glyceraldehyde 3-phosphate: step 1/5. In Neurospora crassa (strain ATCC 24698 / 74-OR23-1A / CBS 708.71 / DSM 1257 / FGSC 987), this protein is Glyceraldehyde-3-phosphate dehydrogenase (gpd-1).